A 372-amino-acid chain; its full sequence is tRNA-specific 2-thiouridylase MnmA (372 aa).

ATP-binding positions include 13–20 and Met39; that span reads GMSGGVDS. Residues 99–101 are interaction with target base in tRNA; it reads NPD. The Nucleophile role is filled by Cys104. Cys104 and Cys200 are disulfide-bonded. An ATP-binding site is contributed by Gly128. Residues 150–152 are interaction with tRNA; it reads KDQ. Residue Cys200 is the Cysteine persulfide intermediate of the active site. Positions 310-311 are interaction with tRNA; that stretch reads RY.

It belongs to the MnmA/TRMU family.

It is found in the cytoplasm. The enzyme catalyses S-sulfanyl-L-cysteinyl-[protein] + uridine(34) in tRNA + AH2 + ATP = 2-thiouridine(34) in tRNA + L-cysteinyl-[protein] + A + AMP + diphosphate + H(+). In terms of biological role, catalyzes the 2-thiolation of uridine at the wobble position (U34) of tRNA, leading to the formation of s(2)U34. The sequence is that of tRNA-specific 2-thiouridylase MnmA from Bacillus licheniformis (strain ATCC 14580 / DSM 13 / JCM 2505 / CCUG 7422 / NBRC 12200 / NCIMB 9375 / NCTC 10341 / NRRL NRS-1264 / Gibson 46).